We begin with the raw amino-acid sequence, 617 residues long: Chaperone protein HscA homolog (617 aa).

The tract at residues 1-23 (MALLQIAEPGQSSAPHEHKRAAG) is disordered.

Belongs to the heat shock protein 70 family.

Chaperone involved in the maturation of iron-sulfur cluster-containing proteins. Has a low intrinsic ATPase activity which is markedly stimulated by HscB. This Vibrio vulnificus (strain YJ016) protein is Chaperone protein HscA homolog.